The chain runs to 289 residues: 4-hydroxybenzoate octaprenyltransferase (289 aa).

Helical transmembrane passes span 23-43 (IGAL…TPGV), 46-66 (LWIL…GCVV), 99-119 (LFVV…TMTI), 141-161 (LPQV…FAAV), 163-183 (ESVP…AVAY), 213-233 (LIIG…GWLN), 234-254 (GLGW…VYQQ), and 268-288 (AFMN…MSYV).

Belongs to the UbiA prenyltransferase family. The cofactor is Mg(2+).

Its subcellular location is the cell inner membrane. The enzyme catalyses all-trans-octaprenyl diphosphate + 4-hydroxybenzoate = 4-hydroxy-3-(all-trans-octaprenyl)benzoate + diphosphate. Its pathway is cofactor biosynthesis; ubiquinone biosynthesis. In terms of biological role, catalyzes the prenylation of para-hydroxybenzoate (PHB) with an all-trans polyprenyl group. Mediates the second step in the final reaction sequence of ubiquinone-8 (UQ-8) biosynthesis, which is the condensation of the polyisoprenoid side chain with PHB, generating the first membrane-bound Q intermediate 3-octaprenyl-4-hydroxybenzoate. This chain is 4-hydroxybenzoate octaprenyltransferase, found in Citrobacter koseri (strain ATCC BAA-895 / CDC 4225-83 / SGSC4696).